The following is a 219-amino-acid chain: PKHD-type hydroxylase AM1_3707 (219 aa).

The 95-residue stretch at 78-172 (SIHTLLFSRY…RLVAVGWVQS (95 aa)) folds into the Fe2OG dioxygenase domain. Histidine 96, aspartate 98, and histidine 153 together coordinate Fe cation. Arginine 163 contacts 2-oxoglutarate.

Fe(2+) is required as a cofactor. The cofactor is L-ascorbate.

This chain is PKHD-type hydroxylase AM1_3707, found in Acaryochloris marina (strain MBIC 11017).